The chain runs to 340 residues: Arginase 1, mitochondrial (340 aa).

Residues M1–T24 constitute a mitochondrion transit peptide. Residues H159, D183, H185, and D187 each contribute to the Mn(2+) site. Substrate contacts are provided by residues H185–Y189 and E193–N195. D268 and D270 together coordinate Mn(2+). A substrate-binding site is contributed by E311.

Belongs to the arginase family. Requires Mn(2+) as cofactor.

Its subcellular location is the mitochondrion. The catalysed reaction is L-arginine + H2O = urea + L-ornithine. It participates in nitrogen metabolism; urea cycle; L-ornithine and urea from L-arginine: step 1/1. Catalyzes the hydrolysis of L-arginine to urea and L-ornithine. The latter can be utilized in the urea cycle or as a precursor for the synthesis of both polyamines and proline. The chain is Arginase 1, mitochondrial from Oryza sativa subsp. indica (Rice).